Reading from the N-terminus, the 39-residue chain is Photosystem II reaction center protein X (39 aa).

A helical membrane pass occupies residues 10 to 30; the sequence is WSLLWGTAIVVIPVTVGLIFI.

This sequence belongs to the PsbX family. Type 1 subfamily. PSII is composed of 1 copy each of membrane proteins PsbA, PsbB, PsbC, PsbD, PsbE, PsbF, PsbH, PsbI, PsbJ, PsbK, PsbL, PsbM, PsbT, PsbX, PsbY, PsbZ, Psb30/Ycf12, peripheral proteins PsbO, CyanoQ (PsbQ), PsbU, PsbV and a large number of cofactors. It forms dimeric complexes.

It localises to the cellular thylakoid membrane. Functionally, involved in the binding and/or turnover of quinones at the Q(B) site of photosystem II (PSII). PSII is a light-driven water plastoquinone oxidoreductase, using light energy to abstract electrons from H(2)O, generating a proton gradient subsequently used for ATP formation. The sequence is that of Photosystem II reaction center protein X from Nostoc punctiforme (strain ATCC 29133 / PCC 73102).